An 87-amino-acid polypeptide reads, in one-letter code: Hemocyanin alpha chain (87 aa).

The protein belongs to the tyrosinase family. Hemocyanin subfamily. As to quaternary structure, polymer that contains six different types of chains (alpha, beta, gamma, delta, epsilon, and zeta). In terms of tissue distribution, hemolymph.

The protein localises to the secreted. Its subcellular location is the extracellular space. In terms of biological role, hemocyanins are copper-containing oxygen carriers occurring freely dissolved in the hemolymph of many mollusks and arthropods. The chain is Hemocyanin alpha chain from Tachypleus tridentatus (Japanese horseshoe crab).